Consider the following 154-residue polypeptide: Flagellar assembly factor FliW (154 aa).

This sequence belongs to the FliW family. In terms of assembly, interacts with translational regulator CsrA and flagellin(s).

Its subcellular location is the cytoplasm. Acts as an anti-CsrA protein, binds CsrA and prevents it from repressing translation of its target genes, one of which is flagellin. Binds to flagellin and participates in the assembly of the flagellum. This is Flagellar assembly factor FliW from Carboxydothermus hydrogenoformans (strain ATCC BAA-161 / DSM 6008 / Z-2901).